A 196-amino-acid polypeptide reads, in one-letter code: MEIISSKLFILLTLATSSLLTSNIFCADELVMSNLHSKENYDKYSEPRGYPKGERSLNFEELKDWGPKNVIKMSTPAVNKMPHSFANLPLRFGRNVQEERSAGATANLPLRSGRNMEVSLVRRVPNLPQRFGRTTTAKSVCRMLSDLCQGSMHSPCANDLFYSMTCQHQEIQNPDQKQSRRLLFKKIDDAELKQEK.

A signal peptide spans 1-26 (MEIISSKLFILLTLATSSLLTSNIFC). Positions 27–55 (ADELVMSNLHSKENYDKYSEPRGYPKGER) are excised as a propeptide. Phenylalanine 92 is modified (phenylalanine amide). 2 consecutive propeptides follow at residues 95–99 (NVQEE) and 115–121 (NMEVSLV). Phenylalanine 131 bears the Phenylalanine amide mark. Positions 134–196 (TTTAKSVCRM…IDDAELKQEK (63 aa)) are excised as a propeptide.

This sequence belongs to the FARP (FMRFamide related peptide) family. As to expression, specifically expressed in the retina. Detected in the hypothalamus.

The protein resides in the secreted. Efficiently inhibits forskolin-induced production of cAMP. Acts as a potent negative regulator of gonadotropin synthesis and secretion. Induces secretion of prolactin. Functionally, efficiently inhibits forskolin-induced production of cAMP. Blocks morphine-induced analgesia. In terms of biological role, shows no inhibitory activity of forskolin-induced production of cAMP. The chain is Pro-FMRFamide-related neuropeptide VF from Homo sapiens (Human).